A 91-amino-acid chain; its full sequence is Small ribosomal subunit protein uS19 (91 aa).

This sequence belongs to the universal ribosomal protein uS19 family.

Functionally, protein S19 forms a complex with S13 that binds strongly to the 16S ribosomal RNA. The polypeptide is Small ribosomal subunit protein uS19 (Azoarcus sp. (strain BH72)).